The primary structure comprises 198 residues: Recombination protein RecR (198 aa).

The segment at 57-72 adopts a C4-type zinc-finger fold; it reads CRVCANIADENPCGIC. Residues 80 to 175 form the Toprim domain; that stretch reads GLICVVERPR…RVTRLAFGLP (96 aa).

This sequence belongs to the RecR family.

May play a role in DNA repair. It seems to be involved in an RecBC-independent recombinational process of DNA repair. It may act with RecF and RecO. This is Recombination protein RecR from Desulforudis audaxviator (strain MP104C).